We begin with the raw amino-acid sequence, 562 residues long: Thermosome subunit alpha (562 aa).

2 disordered regions span residues 1 to 23 (MAQQ…TSGE) and 526 to 551 (GGQV…GMGG). Over residues 537–551 (GPAGGPGGMGGGMGG) the composition is skewed to gly residues.

This sequence belongs to the TCP-1 chaperonin family. In terms of assembly, forms an oligomeric complex of eight-membered rings.

Functionally, molecular chaperone; binds unfolded polypeptides in vitro, and has a weak ATPase activity. The protein is Thermosome subunit alpha (thsA) of Halobacterium salinarum (strain ATCC 700922 / JCM 11081 / NRC-1) (Halobacterium halobium).